A 521-amino-acid polypeptide reads, in one-letter code: Probable glycogen synthase (521 aa).

Belongs to the glycosyltransferase 1 family. Bacterial/plant glycogen synthase subfamily.

It carries out the reaction [(1-&gt;4)-alpha-D-glucosyl](n) + ADP-alpha-D-glucose = [(1-&gt;4)-alpha-D-glucosyl](n+1) + ADP + H(+). The protein operates within glycan biosynthesis; glycogen biosynthesis. Functionally, synthesizes alpha-1,4-glucan chains using ADP-glucose. This is Probable glycogen synthase (glgA) from Methanocaldococcus jannaschii (strain ATCC 43067 / DSM 2661 / JAL-1 / JCM 10045 / NBRC 100440) (Methanococcus jannaschii).